A 273-amino-acid polypeptide reads, in one-letter code: Protein FAM210A (273 aa).

A compositionally biased stretch (low complexity) spans serine 97–proline 106. Residues serine 97–leucine 116 form a disordered region. The span at serine 107 to leucine 116 shows a compositional bias: basic and acidic residues. One can recognise a DUF1279 domain in the interval aspartate 118 to lysine 230. The chain crosses the membrane as a helical span at residues valine 137–alanine 157. The stretch at lysine 230 to lysine 269 forms a coiled coil. Residues lysine 247–glutamate 273 form a disordered region.

It belongs to the FAM210 family. In terms of assembly, interacts with ATAD3A.

It is found in the membrane. Its subcellular location is the mitochondrion. The protein resides in the cytoplasm. May play a role in the structure and strength of both muscle and bone. This is Protein FAM210A (FAM210A) from Bos taurus (Bovine).